The sequence spans 238 residues: Orotidine 5'-phosphate decarboxylase (238 aa).

Substrate is bound by residues Asp-10, Lys-32, 59–68, Thr-122, Arg-184, Gln-193, Gly-213, and Arg-214; that span reads DLKLHDIPNT. Residue Lys-61 is the Proton donor of the active site.

Belongs to the OMP decarboxylase family. Type 1 subfamily. In terms of assembly, homodimer.

It carries out the reaction orotidine 5'-phosphate + H(+) = UMP + CO2. It functions in the pathway pyrimidine metabolism; UMP biosynthesis via de novo pathway; UMP from orotate: step 2/2. Functionally, catalyzes the decarboxylation of orotidine 5'-monophosphate (OMP) to uridine 5'-monophosphate (UMP). This chain is Orotidine 5'-phosphate decarboxylase, found in Bacillus cereus (strain ATCC 10987 / NRS 248).